We begin with the raw amino-acid sequence, 308 residues long: Putative T-box protein 30/42 (308 aa).

Residues 11–192 (MSNEELWKER…KHSTFGNRSE (182 aa)) constitute a DNA-binding region (T-box). Positions 186 to 220 (TFGNRSEGGIKRKTSDAAGQLPSKRSSKKPVKKDV) are disordered.

The protein resides in the nucleus. Its function is as follows. Involved in the regulatory network to control embryonic patterning and morphogenesis. Implicated in negatively regulating vab-7 expression at the anterior of embryos. The sequence is that of Putative T-box protein 30/42 (tbx-30) from Caenorhabditis elegans.